A 143-amino-acid chain; its full sequence is Sirohydrochlorin cobaltochelatase (143 aa).

Histidine 9 functions as the Proton acceptor in the catalytic mechanism. Histidine 9 is a Co(2+) binding site. Histidine 9 contacts Ni(2+). Residues glutamate 45 and 70–75 each bind substrate; that span reads LAHGIH. Histidine 75 lines the Co(2+) pocket. Residue histidine 75 coordinates Ni(2+).

It belongs to the CbiX family. CbiXS subfamily. In terms of assembly, homotetramer; dimer of dimers.

It carries out the reaction Co-sirohydrochlorin + 2 H(+) = sirohydrochlorin + Co(2+). It catalyses the reaction Ni-sirohydrochlorin + 2 H(+) = sirohydrochlorin + Ni(2+). The protein operates within cofactor biosynthesis; adenosylcobalamin biosynthesis; cob(II)yrinate a,c-diamide from sirohydrochlorin (anaerobic route): step 1/10. Catalyzes the insertion of Co(2+) into sirohydrochlorin as part of the anaerobic pathway to cobalamin biosynthesis. Involved in the biosynthesis of the unique nickel-containing tetrapyrrole coenzyme F430, the prosthetic group of methyl-coenzyme M reductase (MCR), which plays a key role in methanogenesis and anaerobic methane oxidation. Catalyzes the insertion of Ni(2+) into sirohydrochlorin to yield Ni-sirohydrochlorin. This chain is Sirohydrochlorin cobaltochelatase, found in Methanocaldococcus jannaschii (strain ATCC 43067 / DSM 2661 / JAL-1 / JCM 10045 / NBRC 100440) (Methanococcus jannaschii).